The chain runs to 536 residues: Probable 1,4-beta-D-glucan cellobiohydrolase B (536 aa).

The N-terminal stretch at 1-21 (MSSFQVYRAALLLSILATANA) is a signal peptide. A catalytic region spans residues 22-458 (QQVGTYTTET…SNIKFGPIGS (437 aa)). Glutamate 233 functions as the Nucleophile in the catalytic mechanism. Glutamate 238 acts as the Proton donor in catalysis. Residues asparagine 351 and asparagine 414 are each glycosylated (N-linked (GlcNAc...) asparagine). A ser/Thr-rich linker region spans residues 459 to 500 (TYSSGSSSGSGSSSSSSSTTTKATSTTLKTTSTTSSGSSSTS). Positions 464-499 (SSSGSGSSSSSSSTTTKATSTTLKTTSTTSSGSSST) are disordered. The CBM1 domain maps to 500–536 (SAAQAYGQCGGQGWTGPTTCVSGYTCTYENAYYSQCL). 2 disulfides stabilise this stretch: cysteine 508/cysteine 525 and cysteine 519/cysteine 535.

The protein belongs to the glycosyl hydrolase 7 (cellulase C) family.

The protein resides in the secreted. It carries out the reaction Hydrolysis of (1-&gt;4)-beta-D-glucosidic linkages in cellulose and cellotetraose, releasing cellobiose from the non-reducing ends of the chains.. In terms of biological role, the biological conversion of cellulose to glucose generally requires three types of hydrolytic enzymes: (1) Endoglucanases which cut internal beta-1,4-glucosidic bonds; (2) Exocellobiohydrolases that cut the disaccharide cellobiose from the non-reducing end of the cellulose polymer chain; (3) Beta-1,4-glucosidases which hydrolyze the cellobiose and other short cello-oligosaccharides to glucose. This Aspergillus niger (strain ATCC MYA-4892 / CBS 513.88 / FGSC A1513) protein is Probable 1,4-beta-D-glucan cellobiohydrolase B (cbhB).